A 125-amino-acid polypeptide reads, in one-letter code: Large ribosomal subunit protein uL22c (125 aa).

This sequence belongs to the universal ribosomal protein uL22 family. Part of the 50S ribosomal subunit.

The protein localises to the plastid. Its subcellular location is the chloroplast. Its function is as follows. This protein binds specifically to 23S rRNA. Functionally, the globular domain of the protein is located near the polypeptide exit tunnel on the outside of the subunit, while an extended beta-hairpin is found that lines the wall of the exit tunnel in the center of the 70S ribosome. The sequence is that of Large ribosomal subunit protein uL22c (rpl22) from Nymphaea alba (White water-lily).